The sequence spans 156 residues: uncharacterized protein (156 aa).

The protein belongs to the mimivirus L223/L227/L812 family.

This is an uncharacterized protein from Acanthamoeba polyphaga mimivirus (APMV).